A 311-amino-acid chain; its full sequence is Methionyl-tRNA formyltransferase (311 aa).

Ser112–Pro115 is a binding site for (6S)-5,6,7,8-tetrahydrofolate.

This sequence belongs to the Fmt family.

It carries out the reaction L-methionyl-tRNA(fMet) + (6R)-10-formyltetrahydrofolate = N-formyl-L-methionyl-tRNA(fMet) + (6S)-5,6,7,8-tetrahydrofolate + H(+). Attaches a formyl group to the free amino group of methionyl-tRNA(fMet). The formyl group appears to play a dual role in the initiator identity of N-formylmethionyl-tRNA by promoting its recognition by IF2 and preventing the misappropriation of this tRNA by the elongation apparatus. The protein is Methionyl-tRNA formyltransferase of Rhizobium etli (strain ATCC 51251 / DSM 11541 / JCM 21823 / NBRC 15573 / CFN 42).